We begin with the raw amino-acid sequence, 331 residues long: Tetraacyldisaccharide 4'-kinase (331 aa).

ATP is bound at residue 58–65 (TVGGSGKT).

Belongs to the LpxK family.

It carries out the reaction a lipid A disaccharide + ATP = a lipid IVA + ADP + H(+). It participates in glycolipid biosynthesis; lipid IV(A) biosynthesis; lipid IV(A) from (3R)-3-hydroxytetradecanoyl-[acyl-carrier-protein] and UDP-N-acetyl-alpha-D-glucosamine: step 6/6. Transfers the gamma-phosphate of ATP to the 4'-position of a tetraacyldisaccharide 1-phosphate intermediate (termed DS-1-P) to form tetraacyldisaccharide 1,4'-bis-phosphate (lipid IVA). This is Tetraacyldisaccharide 4'-kinase from Shewanella denitrificans (strain OS217 / ATCC BAA-1090 / DSM 15013).